The primary structure comprises 969 residues: MLDFLKRFFGSSQERTLKKFQKLVDKVNLYDEMLAPLSDEELRNKTAELKKRYQDGESLDDMLPEAYAVVKNVCRRLTGTPVEVSGYHQNWDMVPYDVQVLGAIAMHKGFITEMQTGEGKTLTAVMPLYLNALTGKPVHLVTVNDYLAQRDCEWVGSILRWLGLTTGVLISGSPLEKRKDIYRCDVVYGTASEFGFDYLRDNSIATSVDEQVGRGFYFAIIDEVDSILIDEARTPLIISGPGEKHNPVYFELKDKVADLVQLQRELCNQLALEARRGLELFLDMDILPKDKKVIEAISEFCRSLWLVSKGMPLNRVLRRVREHPDLRAMIDKWDTYYHAEQNKEESIEKLSQLYIIVDEHNNDFELTDRGMQQWVDKAGGSAEDFVMMDMGHEYALIDGDDTLSPTEKINRKIAISEEDTRRKARAHGLRQLLRAHLLMERDVDYIVRNDQIVIIDEHTGRPQPGRRFSEGLHQAIEAKEHVTIRKESQTFATVTLQNFFRLYEKLAGMTGTAITESKEFKEIYNLYVLQVPTFKECLRVDHNDEFYMTEREKYHAIVKEIARIHAVGNPILIGTESVEVSEKLSRILRQNRIEHTVLNAKNHAQEAEIIAAAGKLGAVTVATNMAGRGTDIKLDEEAVVVGGLHVIGTSRHQSRRIDRQLRGRCARLGDPGSAKFFLSFEDRLMRLFASPKLNALIRHFRPPEGEAMSDPMFNKLIETAQKRVEARNYTIRKHTLEYDDVMNRQRQTIYAFRNDVIRSEDIFGLAKEAISHVALMIASLIVSRDHPTGNSLPRLEEWMNYSFPLQLNIEELKRLKSIDAIAERVADDLIEVFQNKFASMVQEITEAAGEKVDANGVCKDVIRSVMIMHIDEQWKIHLVDMDLLRSEVGLRTVGQKDPLIEFKHESFLLFESLIRDIRIAIVKHLFRLELTMTREQRPQNVVPVVATSFQNNENFGPLELTVISDSDDE.

Residues Q99, 117 to 121 (GEGKT), and D631 contribute to the ATP site.

It belongs to the SecA family. Monomer and homodimer. Part of the essential Sec protein translocation apparatus which comprises SecA, SecYEG and auxiliary proteins SecDF. Other proteins may also be involved.

The protein localises to the cell inner membrane. It is found in the cytoplasm. The catalysed reaction is ATP + H2O + cellular proteinSide 1 = ADP + phosphate + cellular proteinSide 2.. In terms of biological role, part of the Sec protein translocase complex. Interacts with the SecYEG preprotein conducting channel. Has a central role in coupling the hydrolysis of ATP to the transfer of proteins into and across the cell membrane, serving as an ATP-driven molecular motor driving the stepwise translocation of polypeptide chains across the membrane. This is Protein translocase subunit SecA from Chlamydia abortus (strain DSM 27085 / S26/3) (Chlamydophila abortus).